Here is a 160-residue protein sequence, read N- to C-terminus: Transcription elongation factor GreA (160 aa).

The stretch at 49 to 73 forms a coiled coil; sequence HAAKEEQSHNEGRIADLEDKLARAD.

Belongs to the GreA/GreB family.

Functionally, necessary for efficient RNA polymerase transcription elongation past template-encoded arresting sites. The arresting sites in DNA have the property of trapping a certain fraction of elongating RNA polymerases that pass through, resulting in locked ternary complexes. Cleavage of the nascent transcript by cleavage factors such as GreA or GreB allows the resumption of elongation from the new 3'terminus. GreA releases sequences of 2 to 3 nucleotides. This is Transcription elongation factor GreA from Rhodopseudomonas palustris (strain BisA53).